The chain runs to 1116 residues: ELKS/Rab6-interacting/CAST family member 1 (1116 aa).

The interval 1 to 54 (MYGSARSVGKVEPSSQSPGRSPRLPRSPRLGHRRTNSTGGSSGSSVGGGSGKTL) is disordered. Lys-10 is modified (N6-acetyllysine). Residues 13-28 (PSSQSPGRSPRLPRSP) show a composition bias toward low complexity. 3 positions are modified to phosphoserine: Ser-17, Ser-21, and Ser-37. Thr-38 carries the phosphothreonine modification. Positions 40–51 (GSSGSSVGGGSG) are enriched in gly residues. 3 positions are modified to phosphoserine: Ser-55, Ser-75, and Ser-94. Residues 144 to 988 (RQARDNTIMD…RMKLMADNYE (845 aa)) are a coiled coil. Residues 590 to 602 (KEKQMSSLKERVK) show a composition bias toward basic and acidic residues. Disordered stretches follow at residues 590–609 (KEKQ…ADTT) and 814–836 (ARRR…RKKD). Ser-1005 carries the post-translational modification Phosphoserine. Thr-1046 is modified (phosphothreonine). The FIP-RBD domain maps to 1046–1108 (TPPASYNLDD…DHCPDILEQV (63 aa)). Positions 1060 to 1100 (WENELQKMTRGQLQDELEKGERDNAELQEFANAILQQIADH) form a coiled coil.

Part of a complex with CHUK, IKBKB and IKBKG. Interacts with CHUK, IKBKB and IKBKG. The interaction with IKBKG is independent of CHUK and IKBKB. Interacts with NFKBIA. Isoform 4 interacts with PPFIA1, and through its C-terminus with the PDZ domains of RIMS1 and RIMS2. Interacts with ERC2/CAST1. Interacts with the GTB-bound forms of RAB6A isoform 1 and isoform 2 and with RAB6B. The interaction was strongest with RAB6B, followed by RAB6A isoform 2 and weakest with RAB6A isoform 1. Interacts with SDCCAG8. Part of a cortical microtubule stabilization complex (CMSC) composed of KANK1, PPFIA1, PPFIBP1, ERC1/ELKS, PHLDB2/LL5beta, CLASPs, KIF21A and possibly additional interactors; within CMSCs KANK1 and PHLDB2/LL5beta appear to be the core components for targeting of microtubule-binding proteins KIF21A and CLASPs, whereas PPFIA1, PPFIBP1 and ERC1/ELKS serve as scaffolds for protein clustering. As to expression, widely expressed. Isoform 2 and isoform 4 are abundantly expressed in brain. Isoform 1 and isoform 3 are predominantly expressed in testis and thyroid, and isoform 1 predominates in other tissues tested.

It is found in the cytoplasm. Its subcellular location is the cytoskeleton. The protein localises to the microtubule organizing center. It localises to the centrosome. The protein resides in the membrane. It is found in the golgi apparatus membrane. Its subcellular location is the presynaptic cell membrane. The protein localises to the cell projection. It localises to the podosome. In terms of biological role, regulatory subunit of the IKK complex. Probably recruits IkappaBalpha/NFKBIA to the complex. May be involved in the organization of the cytomatrix at the nerve terminals active zone (CAZ) which regulates neurotransmitter release. May be involved in vesicle trafficking at the CAZ. May be involved in Rab-6 regulated endosomes to Golgi transport. The protein is ELKS/Rab6-interacting/CAST family member 1 (ERC1) of Homo sapiens (Human).